The following is a 180-amino-acid chain: NAD(P)H-quinone oxidoreductase subunit 6, chloroplastic (180 aa).

The next 5 membrane-spanning stretches (helical) occupy residues 10–30, 32–52, 57–77, 102–122, and 153–173; these read LLLA…VLLT, IIYS…FYII, FVAV…ILFA, IVCT…SWFG, and FLPF…AITI.

It belongs to the complex I subunit 6 family. As to quaternary structure, NDH is composed of at least 16 different subunits, 5 of which are encoded in the nucleus.

It localises to the plastid. Its subcellular location is the chloroplast thylakoid membrane. It catalyses the reaction a plastoquinone + NADH + (n+1) H(+)(in) = a plastoquinol + NAD(+) + n H(+)(out). The catalysed reaction is a plastoquinone + NADPH + (n+1) H(+)(in) = a plastoquinol + NADP(+) + n H(+)(out). Functionally, NDH shuttles electrons from NAD(P)H:plastoquinone, via FMN and iron-sulfur (Fe-S) centers, to quinones in the photosynthetic chain and possibly in a chloroplast respiratory chain. The immediate electron acceptor for the enzyme in this species is believed to be plastoquinone. Couples the redox reaction to proton translocation, and thus conserves the redox energy in a proton gradient. This chain is NAD(P)H-quinone oxidoreductase subunit 6, chloroplastic (ndhG), found in Cryptomeria japonica (Japanese cedar).